The following is a 679-amino-acid chain: MSKNLLIELGLEELPAYVVTPSEKQLGERLATFLTENRLSFEDIQTFSTPRRLAVRVSGLAAQQTDLTEDFKGPAKKIALDADGNFSKAAQGFVRGKGLTTDAIEFREVKGEEYVYVTKHEAGKPAKEVLLGVTEVLSAMTFPVSMHWANNSFEYIRPVHTLTVLLDDEALDLDFLDIHSGRVSRGHRFLGKETTITSADSYEDDLRSQFVIADAKERQEMIVEQIKTLEVEQGVQVDIDEDLLNEVLNLVEFPTAFMGSFEAKYLDVPEEVLVTSMKNHQRYFVVRDQEGRLMPNFVSVRNGNDQAIENVIKGNEKVLVARLEDGEFFWREDQKLQIADLVAKLTNVTFHEKIGSLAEHMDRTRVIAASLAKEANLSAEEEAAVDRAAQIYKFDLLTGMVGEFDELQGIMGEKYALLSGEDAAVATAIREHYLPDAAGGALPETKVGAVLALADKLDTLLSFFSVGLIPSGSNDPYALRRATQGIVRILDHFGWRIPMDKLVDSLYDLSFDSLAYTNKADVMNFIRARVDKMMGKAAPKDIREAILASSTFVVPEMLAVAEALVKASHTENYKPAVESLSRAFNLAEKADASVHVDPSLFENEQENTLFAAIQGLTLAGSAAQQLEQVFVLSPVINDFFDNTMVMAEDQALKNNRLAILSDLVSKAKTIAAFNQLNTK.

It belongs to the class-II aminoacyl-tRNA synthetase family. Tetramer of two alpha and two beta subunits.

The protein localises to the cytoplasm. The enzyme catalyses tRNA(Gly) + glycine + ATP = glycyl-tRNA(Gly) + AMP + diphosphate. The polypeptide is Glycine--tRNA ligase beta subunit (Streptococcus pyogenes serotype M6 (strain ATCC BAA-946 / MGAS10394)).